The primary structure comprises 727 residues: Catalase-peroxidase (727 aa).

Residues 1–26 are disordered; that stretch reads MSDEKKCPVTGRTSSQVAGSGTSNKD. The span at 11-26 shows a compositional bias: polar residues; it reads GRTSSQVAGSGTSNKD. Residues 96 to 219 constitute a cross-link (tryptophyl-tyrosyl-methioninium (Trp-Tyr) (with M-245)); that stretch reads WHSAGTYRIG…LAAVQMGLIY (124 aa). The Proton acceptor role is filled by H97. Residues 219–245 constitute a cross-link (tryptophyl-tyrosyl-methioninium (Tyr-Met) (with W-96)); it reads YVNPEGPNGDPNAVASGKDVRETFARM. Residue H260 coordinates heme b. The segment covering 346 to 362 has biased composition (basic and acidic residues); sequence SDPEAKKAVPDAHDPSK. Residues 346 to 365 are disordered; the sequence is SDPEAKKAVPDAHDPSKTHP.

Belongs to the peroxidase family. Peroxidase/catalase subfamily. As to quaternary structure, homodimer or homotetramer. Heme b serves as cofactor. Formation of the three residue Trp-Tyr-Met cross-link is important for the catalase, but not the peroxidase activity of the enzyme.

The catalysed reaction is H2O2 + AH2 = A + 2 H2O. The enzyme catalyses 2 H2O2 = O2 + 2 H2O. In terms of biological role, bifunctional enzyme with both catalase and broad-spectrum peroxidase activity. The chain is Catalase-peroxidase from Maridesulfovibrio salexigens (strain ATCC 14822 / DSM 2638 / NCIMB 8403 / VKM B-1763) (Desulfovibrio salexigens).